We begin with the raw amino-acid sequence, 240 residues long: Protein Thf1 (240 aa).

Residues 186-222 (KDLDLYRSNLEKVDQLLKVLEDAAEAERKKKEKQAAS) adopt a coiled-coil conformation. Residues 212–240 (ERKKKEKQAASTTPAIEEAPVTTAESSES) are disordered.

The protein belongs to the THF1 family.

May be involved in photosynthetic membrane biogenesis. This chain is Protein Thf1, found in Synechocystis sp. (strain ATCC 27184 / PCC 6803 / Kazusa).